The sequence spans 321 residues: Beta-ketoacyl-[acyl-carrier-protein] synthase III (321 aa).

Residues cysteine 115 and histidine 248 contribute to the active site. An ACP-binding region spans residues 249-253; it reads QANIR. The active site involves asparagine 278.

This sequence belongs to the thiolase-like superfamily. FabH family. In terms of assembly, homodimer.

It is found in the cytoplasm. It carries out the reaction malonyl-[ACP] + acetyl-CoA + H(+) = 3-oxobutanoyl-[ACP] + CO2 + CoA. It functions in the pathway lipid metabolism; fatty acid biosynthesis. Its function is as follows. Catalyzes the condensation reaction of fatty acid synthesis by the addition to an acyl acceptor of two carbons from malonyl-ACP. Catalyzes the first condensation reaction which initiates fatty acid synthesis and may therefore play a role in governing the total rate of fatty acid production. Possesses both acetoacetyl-ACP synthase and acetyl transacylase activities. Its substrate specificity determines the biosynthesis of branched-chain and/or straight-chain of fatty acids. The chain is Beta-ketoacyl-[acyl-carrier-protein] synthase III from Azoarcus sp. (strain BH72).